The sequence spans 67 residues: Protein AaeX (67 aa).

A run of 2 helical transmembrane segments spans residues 10–30 (FGLSFPPVFFVLLVSLTLFFV) and 43–63 (FVWHPALFNSALFCCLFYLLF).

The protein belongs to the AaeX family.

The protein localises to the cell membrane. The polypeptide is Protein AaeX (Pectobacterium carotovorum subsp. carotovorum (strain PC1)).